The following is a 234-amino-acid chain: Zinc finger FYVE domain-containing protein 21 (234 aa).

The segment at D44 to H104 adopts an FYVE-type zinc-finger fold. Residues C50, C53, C66, C69, C74, C77, C96, and C99 each contribute to the Zn(2+) site. The tract at residues A107–Q234 is PH-like.

In terms of assembly, interacts with PTK2/FAK1. In terms of tissue distribution, widely expressed.

The protein resides in the cell junction. Its subcellular location is the focal adhesion. The protein localises to the cytoplasmic vesicle. It localises to the endosome. Functionally, plays a role in cell adhesion, and thereby in cell motility which requires repeated formation and disassembly of focal adhesions. Regulates microtubule-induced PTK2/FAK1 dephosphorylation, an event important for focal adhesion disassembly, as well as integrin beta-1/ITGB1 cell surface expression. This Mus musculus (Mouse) protein is Zinc finger FYVE domain-containing protein 21 (Zfyve21).